Here is a 215-residue protein sequence, read N- to C-terminus: MSKVYDWFEERLEIQAIADDITSKYVPPHVNIFYCLGGITLTCFLVQVATGFAMTFYYRPTVTEAFASVQYIMTEANFGWLIRSVHRWSASMMVLMMILHVFRVYLTGGFKKPRELTWVTGVILAVLTASFGVTGYSLPRDQIGYWAVKIVTGVPEAIPVIGSPLVELLRGSASVGQSTLTRFYSLHTFVLPLLTAVFMLMHFPMIRKQGISGPL.

A helical membrane pass occupies residues 32–52 (IFYCLGGITLTCFLVQVATGF). Heme c is bound at residue cysteine 35. 2 residues coordinate heme b: histidine 86 and histidine 100. 3 helical membrane-spanning segments follow: residues 90–110 (ASMM…TGGF), 116–136 (LTWV…VTGY), and 186–206 (LHTF…FPMI). Heme b is bound by residues histidine 187 and histidine 202.

Belongs to the cytochrome b family. PetB subfamily. As to quaternary structure, the 4 large subunits of the cytochrome b6-f complex are cytochrome b6, subunit IV (17 kDa polypeptide, PetD), cytochrome f and the Rieske protein, while the 4 small subunits are PetG, PetL, PetM and PetN. The complex functions as a dimer. The cofactor is heme b. Heme c serves as cofactor.

It localises to the plastid. It is found in the chloroplast thylakoid membrane. Its function is as follows. Component of the cytochrome b6-f complex, which mediates electron transfer between photosystem II (PSII) and photosystem I (PSI), cyclic electron flow around PSI, and state transitions. This chain is Cytochrome b6, found in Liriodendron tulipifera (Tuliptree).